Consider the following 794-residue polypeptide: Protocadherin beta-6 (794 aa).

The first 27 residues, 1 to 27 (MMQTKVQNKKRQVAFFILLMLWGEVGS), serve as a signal peptide directing secretion. The Extracellular segment spans residues 28 to 688 (ESIQYSVLEE…AQADLLTVYL (661 aa)). Cadherin domains are found at residues 34 to 132 (VLEE…APEF), 137 to 241 (MLLK…VPEF), 246 to 345 (YEAQ…APEL), 350 to 449 (FISP…APAF), and 454 to 559 (YTLF…SPFV). An N-linked (GlcNAc...) asparagine glycan is attached at N46. An intrachain disulfide couples C95 to C101. N183 carries an N-linked (GlcNAc...) asparagine glycan. N416 carries N-linked (GlcNAc...) asparagine glycosylation. An N-linked (GlcNAc...) asparagine glycan is attached at N565. Residues 566–669 (GSAPCTELVP…LVDGFSQPYL (104 aa)) form the Cadherin 6 domain. The chain crosses the membrane as a helical span at residues 689–709 (VVALASVSSLFLFSVLLFVAV). The Cytoplasmic portion of the chain corresponds to 710–794 (RLCRRSRAAS…PTSRNSFPFS (85 aa)). Residues 773 to 794 (PPQGTEREMEETPTSRNSFPFS) are disordered. Over residues 784–794 (TPTSRNSFPFS) the composition is skewed to polar residues.

In terms of assembly, forms homodimers in trans (molecules expressed by two different cells). Forms promiscuous heterodimers in cis (at the plasma membrane of the same cell) with other protocadherins.

It localises to the cell membrane. Functionally, calcium-dependent cell-adhesion protein involved in cells self-recognition and non-self discrimination. Thereby, it is involved in the establishment and maintenance of specific neuronal connections in the brain. This Pan troglodytes (Chimpanzee) protein is Protocadherin beta-6.